The sequence spans 329 residues: Urease accessory protein UreD 2 (329 aa).

Residues 100–120 form a disordered region; it reads YSRPSDSSKFTNGTQSANSNT. Residues 103 to 120 are compositionally biased toward polar residues; sequence PSDSSKFTNGTQSANSNT.

It belongs to the UreD family. UreD, UreF and UreG form a complex that acts as a GTP-hydrolysis-dependent molecular chaperone, activating the urease apoprotein by helping to assemble the nickel containing metallocenter of UreC. The UreE protein probably delivers the nickel.

Its subcellular location is the cytoplasm. Functionally, required for maturation of urease via the functional incorporation of the urease nickel metallocenter. The polypeptide is Urease accessory protein UreD 2 (Psychrobacter cryohalolentis (strain ATCC BAA-1226 / DSM 17306 / VKM B-2378 / K5)).